Consider the following 304-residue polypeptide: Type II restriction enzyme LlaDCHI (304 aa).

It belongs to the DpnII type II restriction endonuclease family.

It catalyses the reaction Endonucleolytic cleavage of DNA to give specific double-stranded fragments with terminal 5'-phosphates.. Its function is as follows. A P subtype restriction enzyme that recognizes the double-stranded unmethylated sequence 5'-GATC-3' and cleaves before G-1. The polypeptide is Type II restriction enzyme LlaDCHI (llaDCHIR) (Lactococcus lactis subsp. cremoris (Streptococcus cremoris)).